A 227-amino-acid chain; its full sequence is Translation initiation factor 6 (227 aa).

The protein belongs to the eIF-6 family.

In terms of biological role, binds to the 50S ribosomal subunit and prevents its association with the 30S ribosomal subunit to form the 70S initiation complex. This Methanococcus vannielii (strain ATCC 35089 / DSM 1224 / JCM 13029 / OCM 148 / SB) protein is Translation initiation factor 6.